A 247-amino-acid chain; its full sequence is Uridylate kinase (247 aa).

Residue 19 to 22 (KISG) participates in ATP binding. Glycine 61 contacts UMP. ATP contacts are provided by glycine 62 and arginine 66. Residues aspartate 81 and 142-149 (TGNPFFTT) each bind UMP. Threonine 169, glutamine 170, tyrosine 175, and aspartate 178 together coordinate ATP.

Belongs to the UMP kinase family. Homohexamer.

The protein resides in the cytoplasm. It carries out the reaction UMP + ATP = UDP + ADP. It participates in pyrimidine metabolism; CTP biosynthesis via de novo pathway; UDP from UMP (UMPK route): step 1/1. Its activity is regulated as follows. Inhibited by UTP. In terms of biological role, catalyzes the reversible phosphorylation of UMP to UDP. This is Uridylate kinase from Wolbachia pipientis wMel.